The primary structure comprises 86 residues: Putative regulatory protein BBR47_37350 (86 aa).

Belongs to the RemA family.

In Brevibacillus brevis (strain 47 / JCM 6285 / NBRC 100599), this protein is Putative regulatory protein BBR47_37350.